Consider the following 660-residue polypeptide: PAN2-PAN3 deadenylation complex subunit PAN3 (660 aa).

Residues 7 to 36 form a C3H1-type zinc finger; it reads SAKDTFCKNVLIYGYCKYENKGCAFSHTVK. Disordered regions lie at residues 36-60 and 150-186; these read KPTSSVPGSQGSNATTNSSGNTNAD and SPVMAQSVSTPGAKANGNIQHNPYLPGNAGTPQPTSA. Low complexity predominate over residues 43 to 59; sequence GSQGSNATTNSSGNTNA. Residues 59-79 carry the PABPC-interacting motif-2 (PAM-2) motif; it reads ADMKKKFNFNTPSFQPSTVPN. The span at 150–159 shows a compositional bias: polar residues; sequence SPVMAQSVST. A pseudokinase domain region spans residues 252-528; sequence QTLPRSNLPD…LQEFNRNHLS (277 aa). ATP-binding positions include Arg-304, 358 to 365, and 415 to 416; these read DYFPNSNT and SK. Residues 529–567 are a coiled coil; the sequence is RRILNFCSNAQDSQDFMESQLSTELENARVFRLITKLNF. The tract at residues 568–660 is knob domain; sequence IIDRPEYDND…DSAFRTLTRG (93 aa).

This sequence belongs to the protein kinase superfamily. PAN3 family. As to quaternary structure, homodimer. Forms a heterotrimer with a catalytic subunit PAN2 to form the poly(A)-nuclease (PAN) deadenylation complex. Interacts (via PAM-2 motif) with poly(A)-binding protein PAB1 (via PABC domain), conferring substrate specificity of the enzyme complex.

It is found in the cytoplasm. Its function is as follows. Regulatory subunit of the poly(A)-nuclease (PAN) deadenylation complex, one of two cytoplasmic mRNA deadenylases involved in mRNA turnover. PAN specifically shortens poly(A) tails of RNA and the activity is stimulated by poly(A)-binding protein PAB1. PAN deadenylation is followed by rapid degradation of the shortened mRNA tails by the CCR4-NOT complex. Deadenylated mRNAs are then degraded by two alternative mechanisms, namely exosome-mediated 3'-5' exonucleolytic degradation, or deadenylation-dependent mRNA decaping and subsequent 5'-3' exonucleolytic degradation by XRN1. May also be involved in post-transcriptional maturation of mRNA poly(A) tails. PAN3 acts as a positive regulator for PAN activity, recruiting the catalytic subunit PAN2 to mRNA via its interaction with RNA and with PAB1. The protein is PAN2-PAN3 deadenylation complex subunit PAN3 of Debaryomyces hansenii (strain ATCC 36239 / CBS 767 / BCRC 21394 / JCM 1990 / NBRC 0083 / IGC 2968) (Yeast).